The chain runs to 162 residues: NADH-quinone oxidoreductase subunit I (162 aa).

4Fe-4S ferredoxin-type domains follow at residues 53 to 83 (LRRY…IEAE) and 93 to 122 (TRYD…EGPN). Positions 63, 66, 69, 73, 102, 105, 108, and 112 each coordinate [4Fe-4S] cluster.

This sequence belongs to the complex I 23 kDa subunit family. As to quaternary structure, NDH-1 is composed of 14 different subunits. Subunits NuoA, H, J, K, L, M, N constitute the membrane sector of the complex. [4Fe-4S] cluster is required as a cofactor.

The protein resides in the cell inner membrane. It catalyses the reaction a quinone + NADH + 5 H(+)(in) = a quinol + NAD(+) + 4 H(+)(out). NDH-1 shuttles electrons from NADH, via FMN and iron-sulfur (Fe-S) centers, to quinones in the respiratory chain. The immediate electron acceptor for the enzyme in this species is believed to be ubiquinone. Couples the redox reaction to proton translocation (for every two electrons transferred, four hydrogen ions are translocated across the cytoplasmic membrane), and thus conserves the redox energy in a proton gradient. The sequence is that of NADH-quinone oxidoreductase subunit I from Sphingopyxis alaskensis (strain DSM 13593 / LMG 18877 / RB2256) (Sphingomonas alaskensis).